Reading from the N-terminus, the 184-residue chain is Peptide deformylase (184 aa).

Residues cysteine 92 and histidine 134 each coordinate Fe cation. Residue glutamate 135 is part of the active site. Residue histidine 138 participates in Fe cation binding.

The protein belongs to the polypeptide deformylase family. Fe(2+) serves as cofactor.

The enzyme catalyses N-terminal N-formyl-L-methionyl-[peptide] + H2O = N-terminal L-methionyl-[peptide] + formate. Removes the formyl group from the N-terminal Met of newly synthesized proteins. Requires at least a dipeptide for an efficient rate of reaction. N-terminal L-methionine is a prerequisite for activity but the enzyme has broad specificity at other positions. This chain is Peptide deformylase, found in Psychrobacter arcticus (strain DSM 17307 / VKM B-2377 / 273-4).